Here is a 239-residue protein sequence, read N- to C-terminus: Ribonuclease 3 (239 aa).

The RNase III domain maps to 18–141 (YLTLEKALGY…LMAGVYLEAG (124 aa)). Mg(2+) is bound at residue E54. D58 is a catalytic residue. Mg(2+) is bound by residues S127 and E130. The active site involves E130. The region spanning 168 to 237 (DYKTALQELT…AYQALQKLKE (70 aa)) is the DRBM domain.

It belongs to the ribonuclease III family. As to quaternary structure, homodimer. It depends on Mg(2+) as a cofactor.

Its subcellular location is the cytoplasm. The enzyme catalyses Endonucleolytic cleavage to 5'-phosphomonoester.. Its function is as follows. Digests double-stranded RNA. Involved in the processing of primary rRNA transcript to yield the immediate precursors to the large and small rRNAs (23S and 16S). Processes some mRNAs, and tRNAs when they are encoded in the rRNA operon. Processes pre-crRNA and tracrRNA of type II CRISPR loci if present in the organism. In Helicobacter pylori (strain J99 / ATCC 700824) (Campylobacter pylori J99), this protein is Ribonuclease 3.